We begin with the raw amino-acid sequence, 1022 residues long: Dihydropyrimidine dehydrogenase [NADP(+)] (1022 aa).

The interval 26 to 45 (ANVHSTASKKNEKKHWKRNP) is disordered. One can recognise a 4Fe-4S ferredoxin-type 1 domain in the interval 69–100 (ERGALREALRCLKCADAPCQKSCPTNLDIKSF). Residues C79, C82, C87, and C91 each contribute to the [4Fe-4S] cluster site. An FAD-binding site is contributed by V129. 4 residues coordinate [4Fe-4S] cluster: C130, C136, C140, and Q156. Residues 194–198 (GCGPA), 218–226 (EKQKYIGGL), R235, and L261 each bind FAD. NADP(+) is bound by residues 340–343 (AGDT), 364–365 (RK), R371, 437–439 (AFG), and 481–487 (DIAGFAN). Residue 480–489 (GDIAGFANTT) participates in FAD binding. FMN contacts are provided by residues S550 and 574–575 (KT). Substrate is bound by residues N609 and 668–670 (NLS). C671 (proton acceptor) is an active-site residue. K709 contributes to the FMN binding site. 736–737 (NT) lines the substrate pocket. FMN is bound by residues G767, 793 to 795 (TGG), and 816 to 817 (CS). 4Fe-4S ferredoxin-type domains lie at 943–975 (VQALVDPEMCINCGKCYMTCNDSGYQAIKFDPE) and 976–1006 (THLPVITDSCTGCTLCLSVCPIIDCIKMVSR). Residues C952, C955, C958, C962, C985, C988, C991, and C995 each coordinate [4Fe-4S] cluster.

The protein belongs to the dihydropyrimidine dehydrogenase family. Homodimer. FAD is required as a cofactor. It depends on FMN as a cofactor. [4Fe-4S] cluster serves as cofactor.

It localises to the cytoplasm. It catalyses the reaction 5,6-dihydrouracil + NADP(+) = uracil + NADPH + H(+). The catalysed reaction is 5,6-dihydrothymine + NADP(+) = thymine + NADPH + H(+). It functions in the pathway amino-acid biosynthesis; beta-alanine biosynthesis. In terms of biological role, involved in pyrimidine base degradation. Catalyzes the reduction of uracil and thymine. Also involved the degradation of the chemotherapeutic drug 5-fluorouracil. This is Dihydropyrimidine dehydrogenase [NADP(+)] (dpyd) from Danio rerio (Zebrafish).